Consider the following 495-residue polypeptide: Membrane-bound lytic murein transglycosylase F (495 aa).

Residues 1-29 (MEIRKLSLSTIRSIITSLSVLVLVISASA) form the signal peptide. The interval 30 to 273 (TLVRSTPPNV…VTKHFFERHI (244 aa)) is non-LT domain. The tract at residues 274 to 495 (DEVTTGEAMV…TAAQGENLSL (222 aa)) is LT domain. The active site involves glutamate 320.

The protein in the N-terminal section; belongs to the bacterial solute-binding protein 3 family. This sequence in the C-terminal section; belongs to the transglycosylase Slt family.

Its subcellular location is the cell outer membrane. It carries out the reaction Exolytic cleavage of the (1-&gt;4)-beta-glycosidic linkage between N-acetylmuramic acid (MurNAc) and N-acetylglucosamine (GlcNAc) residues in peptidoglycan, from either the reducing or the non-reducing ends of the peptidoglycan chains, with concomitant formation of a 1,6-anhydrobond in the MurNAc residue.. In terms of biological role, murein-degrading enzyme that degrades murein glycan strands and insoluble, high-molecular weight murein sacculi, with the concomitant formation of a 1,6-anhydromuramoyl product. Lytic transglycosylases (LTs) play an integral role in the metabolism of the peptidoglycan (PG) sacculus. Their lytic action creates space within the PG sacculus to allow for its expansion as well as for the insertion of various structures such as secretion systems and flagella. This is Membrane-bound lytic murein transglycosylase F from Cellvibrio japonicus (strain Ueda107) (Pseudomonas fluorescens subsp. cellulosa).